Reading from the N-terminus, the 427-residue chain is Peptidase B (427 aa).

Mn(2+)-binding residues include K195 and D200. K207 is an active-site residue. Residues D218, D277, and E279 each contribute to the Mn(2+) site. R281 is an active-site residue.

The protein belongs to the peptidase M17 family. As to quaternary structure, homohexamer. It depends on Mn(2+) as a cofactor.

Its subcellular location is the cytoplasm. The enzyme catalyses Release of an N-terminal amino acid, Xaa, from a peptide or arylamide. Xaa is preferably Glu or Asp but may be other amino acids, including Leu, Met, His, Cys and Gln.. Functionally, probably plays an important role in intracellular peptide degradation. The protein is Peptidase B of Escherichia coli O127:H6 (strain E2348/69 / EPEC).